The following is a 457-amino-acid chain: tRNA-2-methylthio-N(6)-dimethylallyladenosine synthase (457 aa).

Residues 18 to 133 (KKLFIETYGC…LPELIASVEA (116 aa)) form the MTTase N-terminal domain. 6 residues coordinate [4Fe-4S] cluster: Cys27, Cys63, Cys97, Cys171, Cys175, and Cys178. Residues 157 to 390 (CGNHISGFVS…IALQNRLSAE (234 aa)) enclose the Radical SAM core domain. Residues 393-456 (NRCIGKTYEV…SATLKGEEVF (64 aa)) enclose the TRAM domain.

It belongs to the methylthiotransferase family. MiaB subfamily. In terms of assembly, monomer. Requires [4Fe-4S] cluster as cofactor.

Its subcellular location is the cytoplasm. The catalysed reaction is N(6)-dimethylallyladenosine(37) in tRNA + (sulfur carrier)-SH + AH2 + 2 S-adenosyl-L-methionine = 2-methylsulfanyl-N(6)-dimethylallyladenosine(37) in tRNA + (sulfur carrier)-H + 5'-deoxyadenosine + L-methionine + A + S-adenosyl-L-homocysteine + 2 H(+). Its function is as follows. Catalyzes the methylthiolation of N6-(dimethylallyl)adenosine (i(6)A), leading to the formation of 2-methylthio-N6-(dimethylallyl)adenosine (ms(2)i(6)A) at position 37 in tRNAs that read codons beginning with uridine. This chain is tRNA-2-methylthio-N(6)-dimethylallyladenosine synthase, found in Bacteroides fragilis (strain ATCC 25285 / DSM 2151 / CCUG 4856 / JCM 11019 / LMG 10263 / NCTC 9343 / Onslow / VPI 2553 / EN-2).